Reading from the N-terminus, the 379-residue chain is MSLSGHTHTKEEVQAEVEAGEVQCPALCHQPVLVQECLTLLEPAIVGISRGADSTRDGAGAFFIDGTLGDGGHTQAFLHAYPALRALGVEIDPSMLARARARLTPFGKRLRYVLGWSDVFFASAYASAPASPATGRTAAGAAGVPGAYPAPQAVLLDLGISFFHYRGAMRGFSFAEEHMLDMRLDPQASQTAADLLNRLPQARLAQLFFEGGEERYARRIAQAVCAQRRQAPFCSARAFAEVVARVVPPMRTARFGKRRGVLGVLPKLHPATKAFQALRIAVNRELERLPRLLTAAFTALAPGGRLAVISFHSREDRIVKVHFRHWAKRCSCPARVPICSCGGVARASLITKKPLVPSCVERAANAASRSATLRVIEKR.

Residues 71–73 (GGH), glutamate 90, aspartate 157, and histidine 164 contribute to the S-adenosyl-L-methionine site.

Belongs to the methyltransferase superfamily. RsmH family.

The protein localises to the cytoplasm. The catalysed reaction is cytidine(1402) in 16S rRNA + S-adenosyl-L-methionine = N(4)-methylcytidine(1402) in 16S rRNA + S-adenosyl-L-homocysteine + H(+). Functionally, specifically methylates the N4 position of cytidine in position 1402 (C1402) of 16S rRNA. The sequence is that of Ribosomal RNA small subunit methyltransferase H from Treponema pallidum (strain Nichols).